Here is a 932-residue protein sequence, read N- to C-terminus: Serotype-specific antigen 1 (932 aa).

A signal peptide spans 1-24 (MYKIKHSFNKTLIAISISSFLSIA). The region spanning 25–407 (YATESIENPQ…WGLINLKKAV (383 aa)) is the Peptidase S8 domain. Catalysis depends on charge relay system residues Asp58, His116, and Ser351. The 264-residue stretch at 669–932 (HTPLQTTVWA…PIWLESKCWL (264 aa)) folds into the Autotransporter domain.

The protein belongs to the peptidase S8 family.

It is found in the cell outer membrane. The protein is Serotype-specific antigen 1 (ssa1) of Mannheimia haemolytica (Pasteurella haemolytica).